Here is a 201-residue protein sequence, read N- to C-terminus: Small ribosomal subunit protein eS1 (201 aa).

This sequence belongs to the eukaryotic ribosomal protein eS1 family.

The polypeptide is Small ribosomal subunit protein eS1 (Methanoregula boonei (strain DSM 21154 / JCM 14090 / 6A8)).